A 276-amino-acid polypeptide reads, in one-letter code: Proteasome subunit beta type-8 (276 aa).

Positions 1-72 are cleaved as a propeptide — removed in mature form; sequence MALLDLCGAP…RKVQIEMAHG (72 aa). The active-site Nucleophile is the T73.

Belongs to the peptidase T1B family. In terms of assembly, the 26S proteasome consists of a 20S proteasome core and two 19S regulatory subunits. The 20S proteasome core is composed of 28 subunits that are arranged in four stacked rings, resulting in a barrel-shaped structure. The two end rings are each formed by seven alpha subunits, and the two central rings are each formed by seven beta subunits. The catalytic chamber with the active sites is on the inside of the barrel. Component of the immunoproteasome, where it displaces the equivalent housekeeping subunit PSMB5. Component of the spermatoproteasome, a form of the proteasome specifically found in testis. Directly interacts with POMP. Interacts with TAP1. In terms of processing, autocleaved. The resulting N-terminal Thr residue of the mature subunit is responsible for the nucleophile proteolytic activity.

The protein resides in the cytoplasm. It is found in the nucleus. It catalyses the reaction Cleavage of peptide bonds with very broad specificity.. The proteasome is a multicatalytic proteinase complex which is characterized by its ability to cleave peptides with Arg, Phe, Tyr, Leu, and Glu adjacent to the leaving group at neutral or slightly basic pH. The proteasome has an ATP-dependent proteolytic activity. This subunit is involved in antigen processing to generate class I binding peptides. May participate in the generation of spliced peptides resulting from the ligation of two separate proteasomal cleavage products that are not contiguous in the parental protein. Required for adipocyte differentiation. The sequence is that of Proteasome subunit beta type-8 (Psmb8) from Rattus norvegicus (Rat).